Consider the following 431-residue polypeptide: Phosphomethylpyrimidine synthase (431 aa).

Substrate-binding positions include asparagine 66, methionine 95, tyrosine 124, histidine 163, 185-187 (SRG), 226-229 (DGLR), and glutamate 265. Histidine 269 is a Zn(2+) binding site. Tyrosine 292 is a substrate binding site. Position 333 (histidine 333) interacts with Zn(2+). 3 residues coordinate [4Fe-4S] cluster: cysteine 408, cysteine 411, and cysteine 415.

Belongs to the ThiC family. Requires [4Fe-4S] cluster as cofactor.

The enzyme catalyses 5-amino-1-(5-phospho-beta-D-ribosyl)imidazole + S-adenosyl-L-methionine = 4-amino-2-methyl-5-(phosphooxymethyl)pyrimidine + CO + 5'-deoxyadenosine + formate + L-methionine + 3 H(+). The protein operates within cofactor biosynthesis; thiamine diphosphate biosynthesis. Functionally, catalyzes the synthesis of the hydroxymethylpyrimidine phosphate (HMP-P) moiety of thiamine from aminoimidazole ribotide (AIR) in a radical S-adenosyl-L-methionine (SAM)-dependent reaction. The chain is Phosphomethylpyrimidine synthase from Dehalococcoides mccartyi (strain CBDB1).